Here is a 183-residue protein sequence, read N- to C-terminus: Thymidine kinase (183 aa).

11-18 is a binding site for ATP; the sequence is GPMFSGKT. Glutamate 89 functions as the Proton acceptor in the catalytic mechanism. Phenylalanine 119 is a binding site for substrate. Positions 144 and 147 each coordinate Zn(2+). Residue 163-167 participates in substrate binding; the sequence is VMDIG. Zn(2+) is bound by residues cysteine 176 and cysteine 179.

This sequence belongs to the thymidine kinase family.

It catalyses the reaction thymidine + ATP = dTMP + ADP + H(+). The sequence is that of Thymidine kinase (TK) from Vertebrata (FPV).